The primary structure comprises 410 residues: 23S rRNA (uracil(747)-C(5))-methyltransferase (410 aa).

[4Fe-4S] cluster contacts are provided by cysteine 61, cysteine 67, cysteine 70, and cysteine 137. S-adenosyl-L-methionine contacts are provided by glutamine 253, tyrosine 279, glutamate 300, and aspartate 341. The active-site Nucleophile is cysteine 367.

The protein belongs to the class I-like SAM-binding methyltransferase superfamily. RNA M5U methyltransferase family.

The catalysed reaction is uridine(747) in 23S rRNA + S-adenosyl-L-methionine = 5-methyluridine(747) in 23S rRNA + S-adenosyl-L-homocysteine + H(+). With respect to regulation, activated by magnesium ions. Catalyzes the formation of 5-methyl-uridine at position equivalent to 747 (m5U747) in 23S rRNA (m5U859 in the P.abyssi numbering). This is 23S rRNA (uracil(747)-C(5))-methyltransferase from Pyrococcus abyssi (strain GE5 / Orsay).